A 794-amino-acid polypeptide reads, in one-letter code: Glutamine--tRNA ligase (794 aa).

Positions 192-217 (DNEKPKKKKEKPAKVEDKAAPVATSE) are disordered. The 'HIGH' region motif lies at 277-287 (PEPNGYLHIGH). Residues 278–280 (EPN) and 284–290 (HIGHAKA) each bind ATP. D310 and Y450 together coordinate L-glutamine. ATP contacts are provided by residues T469, 498–499 (RL), and 506–508 (MSK). Positions 505–509 (VMSKR) match the 'KMSKS' region motif.

It belongs to the class-I aminoacyl-tRNA synthetase family.

The enzyme catalyses tRNA(Gln) + L-glutamine + ATP = L-glutaminyl-tRNA(Gln) + AMP + diphosphate. This is Glutamine--tRNA ligase from Lupinus luteus (European yellow lupine).